A 450-amino-acid chain; its full sequence is Protein tweety homolog 1 (450 aa).

Over 1 to 43 the chain is Extracellular; sequence MGAPPGYRPSAWVHLLHQLPRADFQLRPVPSAFAPQEREYQQA. Residues 44-64 traverse the membrane as a helical segment; sequence LLLVAALAGLGLGLSLIFIAV. The Cytoplasmic segment spans residues 65 to 88; it reads YLIRFCCCRPPEPPGAKSPPPGGG. Residues 89-109 traverse the membrane as a helical segment; that stretch reads CVTWNCIAALLVGCAGIGVGF. Residues 110–214 lie on the Extracellular side of the membrane; the sequence is YGNSETSDGV…DVSFVEEYRW (105 aa). A glycan (N-linked (GlcNAc...) asparagine) is linked at asparagine 130. A helical transmembrane segment spans residues 215 to 235; the sequence is LAYVLLLLLELLVCLFTLLGL. The Cytoplasmic segment spans residues 236–240; the sequence is ARQSK. The helical transmembrane segment at 241–261 threads the bilayer; it reads WLVIVMTVMSLLVLVLSWGSM. Over 262–390 the chain is Extracellular; it reads GLEAATAVGL…LRGLCEDTLE (129 aa). Intrachain disulfides connect cysteine 275/cysteine 385 and cysteine 303/cysteine 370. N-linked (GlcNAc...) asparagine glycosylation is found at asparagine 284 and asparagine 355. The chain crosses the membrane as a helical span at residues 391-411; the sequence is GLLFLLLFSLLSAGALATVLC. The Cytoplasmic portion of the chain corresponds to 412–450; sequence SLPRAWALFPPSDDYEDTDDDDPFNPQESKRFVQWQSSI. A disordered region spans residues 427–450; that stretch reads EDTDDDDPFNPQESKRFVQWQSSI. A Phosphoserine modification is found at serine 440.

This sequence belongs to the tweety family. As to quaternary structure, homotetramer; disulfide-linked. Homodimer. N-glycosylated. Contains high-mannose, hybrid and complex oligosaccharides.

The protein resides in the cell membrane. The catalysed reaction is chloride(in) = chloride(out). The enzyme catalyses L-glutamate(out) = L-glutamate(in). Functionally, calcium-independent, swelling-dependent volume-regulated anion channel (VRAC-swell) which plays a pivotal role in the process of regulatory volume decrease (RVD) in the brain through the efflux of anions like chloride and organic osmolytes like glutamate. The polypeptide is Protein tweety homolog 1 (TTYH1) (Bos taurus (Bovine)).